A 361-amino-acid chain; its full sequence is Phospho-N-acetylmuramoyl-pentapeptide-transferase (361 aa).

Helical transmembrane passes span Thr25–Asp45, Thr72–Ala92, Leu95–Tyr115, Leu135–Ala155, Val169–Gly189, Gly200–Ala220, Leu240–Pro260, Ile264–Ala284, Ile289–Val309, and Gln338–Leu358.

Belongs to the glycosyltransferase 4 family. MraY subfamily. The cofactor is Mg(2+).

The protein resides in the cell inner membrane. It catalyses the reaction UDP-N-acetyl-alpha-D-muramoyl-L-alanyl-gamma-D-glutamyl-meso-2,6-diaminopimeloyl-D-alanyl-D-alanine + di-trans,octa-cis-undecaprenyl phosphate = di-trans,octa-cis-undecaprenyl diphospho-N-acetyl-alpha-D-muramoyl-L-alanyl-D-glutamyl-meso-2,6-diaminopimeloyl-D-alanyl-D-alanine + UMP. It participates in cell wall biogenesis; peptidoglycan biosynthesis. Catalyzes the initial step of the lipid cycle reactions in the biosynthesis of the cell wall peptidoglycan: transfers peptidoglycan precursor phospho-MurNAc-pentapeptide from UDP-MurNAc-pentapeptide onto the lipid carrier undecaprenyl phosphate, yielding undecaprenyl-pyrophosphoryl-MurNAc-pentapeptide, known as lipid I. The polypeptide is Phospho-N-acetylmuramoyl-pentapeptide-transferase (Rhodopseudomonas palustris (strain ATCC BAA-98 / CGA009)).